Here is a 303-residue protein sequence, read N- to C-terminus: Mycothiol acetyltransferase (303 aa).

N-acetyltransferase domains are found at residues 4–141 and 154–303; these read ITVR…RSLA and IVLR…ANGA. Glu38 contributes to the 1D-myo-inositol 2-(L-cysteinylamino)-2-deoxy-alpha-D-glucopyranoside binding site. 80–82 is a binding site for acetyl-CoA; the sequence is AAV. 1D-myo-inositol 2-(L-cysteinylamino)-2-deoxy-alpha-D-glucopyranoside is bound by residues Glu181, Lys223, and Glu234. Residues 238 to 240 and 245 to 251 contribute to the acetyl-CoA site; these read VGI and QGRGLGR. Residue Tyr272 participates in 1D-myo-inositol 2-(L-cysteinylamino)-2-deoxy-alpha-D-glucopyranoside binding. Residue 277 to 282 participates in acetyl-CoA binding; that stretch reads NTAAVN.

The protein belongs to the acetyltransferase family. MshD subfamily. In terms of assembly, monomer.

It carries out the reaction 1D-myo-inositol 2-(L-cysteinylamino)-2-deoxy-alpha-D-glucopyranoside + acetyl-CoA = mycothiol + CoA + H(+). Catalyzes the transfer of acetyl from acetyl-CoA to desacetylmycothiol (Cys-GlcN-Ins) to form mycothiol. This is Mycothiol acetyltransferase from Nocardia farcinica (strain IFM 10152).